The chain runs to 162 residues: Endoribonuclease YbeY (162 aa).

Histidine 128, histidine 132, and histidine 138 together coordinate Zn(2+).

The protein belongs to the endoribonuclease YbeY family. The cofactor is Zn(2+).

The protein resides in the cytoplasm. Its function is as follows. Single strand-specific metallo-endoribonuclease involved in late-stage 70S ribosome quality control and in maturation of the 3' terminus of the 16S rRNA. This chain is Endoribonuclease YbeY, found in Lactococcus lactis subsp. cremoris (strain SK11).